The following is a 90-amino-acid chain: Cell division topological specificity factor (90 aa).

This sequence belongs to the MinE family.

Its function is as follows. Prevents the cell division inhibition by proteins MinC and MinD at internal division sites while permitting inhibition at polar sites. This ensures cell division at the proper site by restricting the formation of a division septum at the midpoint of the long axis of the cell. In Lachnoclostridium phytofermentans (strain ATCC 700394 / DSM 18823 / ISDg) (Clostridium phytofermentans), this protein is Cell division topological specificity factor.